A 296-amino-acid chain; its full sequence is Nucleotide-binding protein SUB0630 (296 aa).

13–20 (GMSGAGKT) serves as a coordination point for ATP. 63–66 (DMRS) contributes to the GTP binding site.

Belongs to the RapZ-like family.

Displays ATPase and GTPase activities. This is Nucleotide-binding protein SUB0630 from Streptococcus uberis (strain ATCC BAA-854 / 0140J).